A 347-amino-acid polypeptide reads, in one-letter code: S-adenosylmethionine:tRNA ribosyltransferase-isomerase (347 aa).

Belongs to the QueA family. Monomer.

Its subcellular location is the cytoplasm. It carries out the reaction 7-aminomethyl-7-carbaguanosine(34) in tRNA + S-adenosyl-L-methionine = epoxyqueuosine(34) in tRNA + adenine + L-methionine + 2 H(+). Its pathway is tRNA modification; tRNA-queuosine biosynthesis. Its function is as follows. Transfers and isomerizes the ribose moiety from AdoMet to the 7-aminomethyl group of 7-deazaguanine (preQ1-tRNA) to give epoxyqueuosine (oQ-tRNA). This Pseudomonas paraeruginosa (strain DSM 24068 / PA7) (Pseudomonas aeruginosa (strain PA7)) protein is S-adenosylmethionine:tRNA ribosyltransferase-isomerase.